Reading from the N-terminus, the 340-residue chain is N-acetyl-gamma-glutamyl-phosphate reductase (340 aa).

Cysteine 146 is a catalytic residue.

It belongs to the NAGSA dehydrogenase family. Type 1 subfamily.

The protein localises to the cytoplasm. The enzyme catalyses N-acetyl-L-glutamate 5-semialdehyde + phosphate + NADP(+) = N-acetyl-L-glutamyl 5-phosphate + NADPH + H(+). It functions in the pathway amino-acid biosynthesis; L-arginine biosynthesis; N(2)-acetyl-L-ornithine from L-glutamate: step 3/4. Its function is as follows. Catalyzes the NADPH-dependent reduction of N-acetyl-5-glutamyl phosphate to yield N-acetyl-L-glutamate 5-semialdehyde. The chain is N-acetyl-gamma-glutamyl-phosphate reductase from Streptococcus thermophilus (strain CNRZ 1066).